Here is a 669-residue protein sequence, read N- to C-terminus: UvrABC system protein B (669 aa).

A Helicase ATP-binding domain is found at 26-183 (EGLEDGLAHQ…RRLADLQYTR (158 aa)). 39–46 (GVTGSGKT) contributes to the ATP binding site. A Beta-hairpin motif is present at residues 92 to 115 (YYDYYQPEAYVPSSDTFIEKDASV). One can recognise a Helicase C-terminal domain in the interval 431-593 (QVDDLLSEIR…IVPKGLNKKI (163 aa)). The UVR domain maps to 629–664 (EKEIQRLETEMYQHAKDLEFEKAAQTRDKLQTLRAQ).

This sequence belongs to the UvrB family. As to quaternary structure, forms a heterotetramer with UvrA during the search for lesions. Interacts with UvrC in an incision complex.

Its subcellular location is the cytoplasm. The UvrABC repair system catalyzes the recognition and processing of DNA lesions. A damage recognition complex composed of 2 UvrA and 2 UvrB subunits scans DNA for abnormalities. Upon binding of the UvrA(2)B(2) complex to a putative damaged site, the DNA wraps around one UvrB monomer. DNA wrap is dependent on ATP binding by UvrB and probably causes local melting of the DNA helix, facilitating insertion of UvrB beta-hairpin between the DNA strands. Then UvrB probes one DNA strand for the presence of a lesion. If a lesion is found the UvrA subunits dissociate and the UvrB-DNA preincision complex is formed. This complex is subsequently bound by UvrC and the second UvrB is released. If no lesion is found, the DNA wraps around the other UvrB subunit that will check the other stand for damage. This is UvrABC system protein B from Proteus mirabilis (strain HI4320).